The sequence spans 126 residues: Protein ApaG (126 aa).

Positions 2 to 126 constitute an ApaG domain; that stretch reads SDPRYQVDVS…FRLAVPGALH (125 aa).

The protein is Protein ApaG of Pseudomonas fluorescens (strain ATCC BAA-477 / NRRL B-23932 / Pf-5).